We begin with the raw amino-acid sequence, 308 residues long: UDP-N-acetylenolpyruvoylglucosamine reductase (308 aa).

The 166-residue stretch at 35–200 (RVGGPAQVLF…TSARFRGEPM (166 aa)) folds into the FAD-binding PCMH-type domain. The active site involves Arg-180. Basic and acidic residues predominate over residues 211–226 (EVQRHRETAQPVREKT). The tract at residues 211-236 (EVQRHRETAQPVREKTGGSTFKNPPG) is disordered. Ser-229 serves as the catalytic Proton donor. The active site involves Glu-299.

Belongs to the MurB family. FAD is required as a cofactor.

The protein resides in the cytoplasm. It catalyses the reaction UDP-N-acetyl-alpha-D-muramate + NADP(+) = UDP-N-acetyl-3-O-(1-carboxyvinyl)-alpha-D-glucosamine + NADPH + H(+). It participates in cell wall biogenesis; peptidoglycan biosynthesis. Cell wall formation. The polypeptide is UDP-N-acetylenolpyruvoylglucosamine reductase (Rhodopseudomonas palustris (strain BisB18)).